The primary structure comprises 252 residues: Lipoprotein PrgK (252 aa).

The signal sequence occupies residues 1–17 (MIRRYLYTFLLVMTLAG). Cysteine 18 is lipidated: N-palmitoyl cysteine. Cysteine 18 carries S-diacylglycerol cysteine lipidation. A helical membrane pass occupies residues 207 to 227 (FATSWIVLIILLSVMSAGFGV).

The protein belongs to the YscJ lipoprotein family.

The protein resides in the cell outer membrane. In terms of biological role, required for invasion of epithelial cells. Could be involved in protein secretion. The sequence is that of Lipoprotein PrgK (prgK) from Salmonella typhimurium (strain LT2 / SGSC1412 / ATCC 700720).